The sequence spans 264 residues: 3-methyl-2-oxobutanoate hydroxymethyltransferase (264 aa).

Positions 45 and 84 each coordinate Mg(2+). Residues 45–46, D84, and K112 contribute to the 3-methyl-2-oxobutanoate site; that span reads DS. Mg(2+) is bound at residue E114. Residue E181 is the Proton acceptor of the active site.

It belongs to the PanB family. Homodecamer; pentamer of dimers. Requires Mg(2+) as cofactor.

Its subcellular location is the cytoplasm. The catalysed reaction is 3-methyl-2-oxobutanoate + (6R)-5,10-methylene-5,6,7,8-tetrahydrofolate + H2O = 2-dehydropantoate + (6S)-5,6,7,8-tetrahydrofolate. It functions in the pathway cofactor biosynthesis; (R)-pantothenate biosynthesis; (R)-pantoate from 3-methyl-2-oxobutanoate: step 1/2. Catalyzes the reversible reaction in which hydroxymethyl group from 5,10-methylenetetrahydrofolate is transferred onto alpha-ketoisovalerate to form ketopantoate. The protein is 3-methyl-2-oxobutanoate hydroxymethyltransferase of Pectobacterium atrosepticum (strain SCRI 1043 / ATCC BAA-672) (Erwinia carotovora subsp. atroseptica).